A 468-amino-acid polypeptide reads, in one-letter code: Eukaryotic translation initiation factor 3 subunit M (468 aa).

The tract at residues 40–61 (VAPLIEPLRQQEQSEEEPDRKQ) is disordered. The PCI domain maps to 206–377 (DLELAQTHVV…SEFLVHRATY (172 aa)). The interval 419 to 468 (QAAAEEVGQGKSGDKGAKGGDRRRNPQQQQQSQPSQPQQAREVELVGGAE) is disordered. The segment covering 430–442 (SGDKGAKGGDRRR) has biased composition (basic and acidic residues). The span at 444–457 (PQQQQQSQPSQPQQ) shows a compositional bias: low complexity.

Belongs to the eIF-3 subunit M family. Component of the eukaryotic translation initiation factor 3 (eIF-3) complex.

The protein localises to the cytoplasm. Functionally, component of the eukaryotic translation initiation factor 3 (eIF-3) complex, which is involved in protein synthesis of a specialized repertoire of mRNAs and, together with other initiation factors, stimulates binding of mRNA and methionyl-tRNAi to the 40S ribosome. The eIF-3 complex specifically targets and initiates translation of a subset of mRNAs involved in cell proliferation. This chain is Eukaryotic translation initiation factor 3 subunit M, found in Aspergillus fumigatus (strain CBS 144.89 / FGSC A1163 / CEA10) (Neosartorya fumigata).